Consider the following 185-residue polypeptide: Large ribosomal subunit protein uL22 (185 aa).

It belongs to the universal ribosomal protein uL22 family. As to quaternary structure, part of the 50S ribosomal subunit.

In terms of biological role, this protein binds specifically to 23S rRNA. It makes multiple contacts with different domains of the 23S rRNA in the assembled 50S subunit and ribosome. Functionally, the globular domain of the protein is located near the polypeptide exit tunnel on the outside of the subunit, while an extended beta-hairpin is found that lines the wall of the exit tunnel in the center of the 70S ribosome. In Caldivirga maquilingensis (strain ATCC 700844 / DSM 13496 / JCM 10307 / IC-167), this protein is Large ribosomal subunit protein uL22.